Reading from the N-terminus, the 226-residue chain is Ribonuclease 3 (226 aa).

One can recognise an RNase III domain in the interval 7-129; it reads LPRLCRTLGY…IIGAVYLDAD (123 aa). E42 contacts Mg(2+). D46 is an active-site residue. Mg(2+)-binding residues include D115 and E118. E118 is an active-site residue. The DRBM domain maps to 156 to 226; the sequence is DAKTLLQEYL…AAQVLELLNQ (71 aa).

Belongs to the ribonuclease III family. Homodimer. Requires Mg(2+) as cofactor.

It is found in the cytoplasm. It carries out the reaction Endonucleolytic cleavage to 5'-phosphomonoester.. In terms of biological role, digests double-stranded RNA. Involved in the processing of primary rRNA transcript to yield the immediate precursors to the large and small rRNAs (23S and 16S). Processes some mRNAs, and tRNAs when they are encoded in the rRNA operon. Processes pre-crRNA and tracrRNA of type II CRISPR loci if present in the organism. In Shewanella amazonensis (strain ATCC BAA-1098 / SB2B), this protein is Ribonuclease 3.